A 999-amino-acid polypeptide reads, in one-letter code: RING finger domain and kelch repeat-containing protein DDB_G0271372 (999 aa).

The segment at 7 to 49 (CPNCLKVFNNPRQLECDHILCTRCIEGVYNPGRTPIIKCPVCD) adopts an RING-type zinc-finger fold. Residues 92-143 (STGSSNNNNNNNNNNNNNNNNFVINNSNNKNNGATTTTTTTTTTTNSNSNST) are compositionally biased toward low complexity. 2 disordered regions span residues 92-147 (STGS…KSKV) and 159-209 (ASPK…SSPP). Residues 165–196 (GSSQGSLTTINNQKKLTLSPQRASSTTTTSVN) are compositionally biased toward polar residues. The B box-type zinc finger occupies 258 to 302 (AELSKCNDHDQKKFTIFCTDCDQLLCDECLNNNQQQHENHQLNKI). 4 residues coordinate Zn(2+): Cys263, His266, Cys286, and His294. Residues 355-402 (DIDTMIENLKERKNALISQIDKEYEEQKLELKDQIETINTTIVDIQNN) are a coiled coil. Composition is skewed to low complexity over residues 485 to 516 (GVSSSPTGTGSNGTPQQQQQQSANGNPTIITT) and 526 to 536 (SPSPTSSSSST). The segment at 485–637 (GVSSSPTGTG…TSTNGSNTKI (153 aa)) is disordered. Over residues 552-612 (LSSQNYDNFG…SHGSKLNDNI (61 aa)) the composition is skewed to polar residues. A compositionally biased stretch (low complexity) spans 613–635 (NTNNNNSPSPTSSSTTSTNGSNT). Kelch repeat units lie at residues 655-700 (ITAR…YDNN), 702-745 (TIYR…VFDG), 748-793 (YIYL…YHPT), 796-842 (CIYV…FDGS), and 844-892 (YINI…SMNL). Positions 904 to 924 (NSFSSISSHSSLNSSSSNNGI) are enriched in low complexity. Positions 904-936 (NSFSSISSHSSLNSSSSNNGISGSGGSGGDNEI) are disordered.

In Dictyostelium discoideum (Social amoeba), this protein is RING finger domain and kelch repeat-containing protein DDB_G0271372.